Consider the following 145-residue polypeptide: Ribonuclease P protein component (145 aa).

The disordered stretch occupies residues 121 to 145; sequence PAAAGTMPPARTVHPSSLSPTEPEL. The span at 134-145 shows a compositional bias: polar residues; that stretch reads HPSSLSPTEPEL.

The protein belongs to the RnpA family. As to quaternary structure, consists of a catalytic RNA component (M1 or rnpB) and a protein subunit.

It carries out the reaction Endonucleolytic cleavage of RNA, removing 5'-extranucleotides from tRNA precursor.. RNaseP catalyzes the removal of the 5'-leader sequence from pre-tRNA to produce the mature 5'-terminus. It can also cleave other RNA substrates such as 4.5S RNA. The protein component plays an auxiliary but essential role in vivo by binding to the 5'-leader sequence and broadening the substrate specificity of the ribozyme. The polypeptide is Ribonuclease P protein component (Xanthomonas axonopodis pv. citri (strain 306)).